The primary structure comprises 250 residues: Pimeloyl-[acyl-carrier protein] methyl ester esterase (250 aa).

Substrate is bound by residues tryptophan 12, 71-72 (SL), and 138-142 (FVALQ). The active-site Nucleophile is the serine 71. Residues aspartate 202 and histidine 230 contribute to the active site. Histidine 230 lines the substrate pocket.

The protein belongs to the AB hydrolase superfamily. Carboxylesterase BioH family. Monomer.

The protein localises to the cytoplasm. The catalysed reaction is 6-carboxyhexanoyl-[ACP] methyl ester + H2O = 6-carboxyhexanoyl-[ACP] + methanol + H(+). It functions in the pathway cofactor biosynthesis; biotin biosynthesis. In terms of biological role, the physiological role of BioH is to remove the methyl group introduced by BioC when the pimeloyl moiety is complete. It allows to synthesize pimeloyl-ACP via the fatty acid synthetic pathway through the hydrolysis of the ester bonds of pimeloyl-ACP esters. This is Pimeloyl-[acyl-carrier protein] methyl ester esterase from Aromatoleum aromaticum (strain DSM 19018 / LMG 30748 / EbN1) (Azoarcus sp. (strain EbN1)).